The chain runs to 363 residues: tRNA N6-adenosine threonylcarbamoyltransferase (363 aa).

His-117 and His-121 together coordinate Fe cation. Substrate contacts are provided by residues 139–143 (LVSGG), Asp-172, Gly-185, and Asn-287. Asp-315 contributes to the Fe cation binding site.

Belongs to the KAE1 / TsaD family. Requires Fe(2+) as cofactor.

It localises to the cytoplasm. It carries out the reaction L-threonylcarbamoyladenylate + adenosine(37) in tRNA = N(6)-L-threonylcarbamoyladenosine(37) in tRNA + AMP + H(+). Its function is as follows. Required for the formation of a threonylcarbamoyl group on adenosine at position 37 (t(6)A37) in tRNAs that read codons beginning with adenine. Is involved in the transfer of the threonylcarbamoyl moiety of threonylcarbamoyl-AMP (TC-AMP) to the N6 group of A37, together with TsaE and TsaB. TsaD likely plays a direct catalytic role in this reaction. This is tRNA N6-adenosine threonylcarbamoyltransferase from Cereibacter sphaeroides (strain ATCC 17025 / ATH 2.4.3) (Rhodobacter sphaeroides).